Here is a 156-residue protein sequence, read N- to C-terminus: Calglandulin (156 aa).

EF-hand domains are found at residues 8–43 (EQITEYKGIFEMFDEEGNGLVKTDDLESLMSLIGIN), 44–79 (PTKRDLANMAKDVDKDKKGTFNCDGFLVLMGIYHEK), 82–117 (NQDEELRAAFKVFDKEHKGYIEWDTLKYVLMNAGEP), and 118–153 (LNEHEAELMMKEADKDGDGTIDYEEFVAMMTGESFK). Residues Asp-131, Asp-133, Asp-135, Thr-137, and Glu-142 each contribute to the Ca(2+) site.

Belongs to the calmodulin family. Calglandulin subfamily. Expressed by the venom gland.

The protein localises to the cytoplasm. May be involved in the cellular control mechanism of the secretion of toxins from the gland into the venom. The sequence is that of Calglandulin from Hoplocephalus stephensii (Stephens's banded snake).